We begin with the raw amino-acid sequence, 775 residues long: Ubiquitin carboxyl-terminal hydrolase 14 (775 aa).

The UBP-type 1; degenerate zinc-finger motif lies at 1–108 (MSCPHLTETN…EDLYDYFYVP (108 aa)). Residues Cys-25, Cys-28, Cys-41, Cys-44, Cys-49, His-56, His-60, His-66, Cys-153, His-155, Cys-174, Cys-177, Cys-186, Cys-189, Cys-194, His-207, His-211, His-217, Cys-236, and Cys-239 each coordinate Zn(2+). The UBP-type 2 zinc finger occupies 151–259 (TTCDHIINLP…THMLNFGIDI (109 aa)). Positions 300-774 (TGLKNLGNSC…TGYVYLFERL (475 aa)) constitute a USP domain. Catalysis depends on Cys-309, which acts as the Nucleophile. A Phosphoserine modification is found at Ser-456. 2 consecutive UBA domains span residues 576-617 (EWNQ…LFEH) and 639-679 (SVSE…ILNH). The Proton acceptor role is filled by His-730.

It belongs to the peptidase C19 family.

The enzyme catalyses Thiol-dependent hydrolysis of ester, thioester, amide, peptide and isopeptide bonds formed by the C-terminal Gly of ubiquitin (a 76-residue protein attached to proteins as an intracellular targeting signal).. The polypeptide is Ubiquitin carboxyl-terminal hydrolase 14 (ubp14) (Schizosaccharomyces pombe (strain 972 / ATCC 24843) (Fission yeast)).